A 613-amino-acid polypeptide reads, in one-letter code: Dihydroxy-acid dehydratase (613 aa).

Mg(2+) is bound at residue Asp-81. Cys-122 contributes to the [2Fe-2S] cluster binding site. Mg(2+) contacts are provided by Asp-123 and Lys-124. Lys-124 carries the post-translational modification N6-carboxylysine. [2Fe-2S] cluster is bound at residue Cys-193. Glu-489 provides a ligand contact to Mg(2+). Residue Ser-515 is the Proton acceptor of the active site.

It belongs to the IlvD/Edd family. In terms of assembly, homodimer. Requires [2Fe-2S] cluster as cofactor. The cofactor is Mg(2+).

It carries out the reaction (2R)-2,3-dihydroxy-3-methylbutanoate = 3-methyl-2-oxobutanoate + H2O. The catalysed reaction is (2R,3R)-2,3-dihydroxy-3-methylpentanoate = (S)-3-methyl-2-oxopentanoate + H2O. It participates in amino-acid biosynthesis; L-isoleucine biosynthesis; L-isoleucine from 2-oxobutanoate: step 3/4. The protein operates within amino-acid biosynthesis; L-valine biosynthesis; L-valine from pyruvate: step 3/4. Its function is as follows. Functions in the biosynthesis of branched-chain amino acids. Catalyzes the dehydration of (2R,3R)-2,3-dihydroxy-3-methylpentanoate (2,3-dihydroxy-3-methylvalerate) into 2-oxo-3-methylpentanoate (2-oxo-3-methylvalerate) and of (2R)-2,3-dihydroxy-3-methylbutanoate (2,3-dihydroxyisovalerate) into 2-oxo-3-methylbutanoate (2-oxoisovalerate), the penultimate precursor to L-isoleucine and L-valine, respectively. This chain is Dihydroxy-acid dehydratase, found in Pseudomonas fluorescens (strain Pf0-1).